The primary structure comprises 252 residues: Imidazole glycerol phosphate synthase subunit HisF (252 aa).

Catalysis depends on residues aspartate 11 and aspartate 130.

The protein belongs to the HisA/HisF family. As to quaternary structure, heterodimer of HisH and HisF.

Its subcellular location is the cytoplasm. It carries out the reaction 5-[(5-phospho-1-deoxy-D-ribulos-1-ylimino)methylamino]-1-(5-phospho-beta-D-ribosyl)imidazole-4-carboxamide + L-glutamine = D-erythro-1-(imidazol-4-yl)glycerol 3-phosphate + 5-amino-1-(5-phospho-beta-D-ribosyl)imidazole-4-carboxamide + L-glutamate + H(+). It participates in amino-acid biosynthesis; L-histidine biosynthesis; L-histidine from 5-phospho-alpha-D-ribose 1-diphosphate: step 5/9. Functionally, IGPS catalyzes the conversion of PRFAR and glutamine to IGP, AICAR and glutamate. The HisF subunit catalyzes the cyclization activity that produces IGP and AICAR from PRFAR using the ammonia provided by the HisH subunit. The polypeptide is Imidazole glycerol phosphate synthase subunit HisF (Desulforamulus reducens (strain ATCC BAA-1160 / DSM 100696 / MI-1) (Desulfotomaculum reducens)).